The primary structure comprises 227 residues: Urease accessory protein UreF (227 aa).

The protein belongs to the UreF family. As to quaternary structure, ureD, UreF and UreG form a complex that acts as a GTP-hydrolysis-dependent molecular chaperone, activating the urease apoprotein by helping to assemble the nickel containing metallocenter of UreC. The UreE protein probably delivers the nickel.

The protein resides in the cytoplasm. Required for maturation of urease via the functional incorporation of the urease nickel metallocenter. This is Urease accessory protein UreF from Actinobacillus pleuropneumoniae serotype 3 (strain JL03).